The primary structure comprises 328 residues: Arabinose 5-phosphate isomerase KdsD (328 aa).

The SIS domain maps to Cys-42 to Phe-184. Substrate contacts are provided by residues Gly-75 to Thr-76, His-82, His-88, Ala-114 to His-123, Lys-148 to Ala-150, Thr-222, and Asp-275. Position 82 (His-82) interacts with Zn(2+). Residues Met-210 to Val-268 enclose the CBS 1 domain. Residues Met-277–Val-328 form the CBS 2 domain.

It belongs to the SIS family. GutQ/KpsF subfamily. In terms of assembly, homotetramer.

The enzyme catalyses D-arabinose 5-phosphate = D-ribulose 5-phosphate. The protein operates within carbohydrate biosynthesis; 3-deoxy-D-manno-octulosonate biosynthesis; 3-deoxy-D-manno-octulosonate from D-ribulose 5-phosphate: step 1/3. It participates in bacterial outer membrane biogenesis; lipopolysaccharide biosynthesis. Completely inhibited by 10 uM of nickel, copper, cadmium and mercury ions. Inhibited by zinc with an IC(50) of 1-3 uM. Metal ion inhibition may be a mechanism to control activity in vivo. Its function is as follows. Involved in the biosynthesis of 3-deoxy-D-manno-octulosonate (KDO), a unique 8-carbon sugar component of lipopolysaccharides (LPSs). KdsD is not essential in the KDO biosynthesis and can be substituted by GutQ. Catalyzes the reversible aldol-ketol isomerization between D-ribulose 5-phosphate (Ru5P) and D-arabinose 5-phosphate (A5P). The protein is Arabinose 5-phosphate isomerase KdsD (kdsD) of Escherichia coli (strain K12).